The sequence spans 130 residues: Metastasis-suppressor KiSS-1 (130 aa).

The signal sequence occupies residues 1-19 (MISMASWQLLLLLCVATYG). Residues 49–82 (KESRYAESKPGSAGLRARRSSPCPPVEGPAGRQR) form a disordered region. A disulfide bond links Cys71 and Cys85. The residue at position 110 (Tyr110) is a Phosphotyrosine. The tract at residues 110–119 (YNWNSFGLRY) is essential for receptor binding and receptor activation. A Tyrosine amide modification is found at Tyr119.

This sequence belongs to the KISS1 family. As to expression, weak in all tissue types with highest levels in lung and 15- 17-day embryos. Expressed in areas of the hypothalamus implicated in the neuroendocrine regulation of gonadotropin secretion, including the anteroventral periventricular nucleus, the periventricular nucleus, and the arcuate nucleus.

Its subcellular location is the secreted. Metastasis suppressor protein. May regulate events downstream of cell-matrix adhesion, perhaps involving cytoskeletal reorganization. Generates a C-terminally amidated peptide, metastin which functions as the endogenous ligand of the G-protein coupled receptor GPR54. Activation of the receptor inhibits cell proliferation and cell migration, key characteristics of tumor metastasis. The receptor is also essential for normal gonadotropin-released hormone physiology and for puberty. The hypothalamic KiSS1/GPR54 system is a pivotal factor in central regulation of the gonadotropic axis at puberty and in adulthood. Intracerebroventricular administration induces an increase in serum LH and FSH levels in prepubertal male and female as well as in adult animals. In Mus musculus (Mouse), this protein is Metastasis-suppressor KiSS-1 (Kiss1).